The primary structure comprises 245 residues: Ribonuclease 3 (245 aa).

The region spanning 17–146 (FAKKMNELGF…FVGALYLDQG (130 aa)) is the RNase III domain. Residue E59 coordinates Mg(2+). Residue D63 is part of the active site. Positions 132 and 135 each coordinate Mg(2+). The active site involves E135. The DRBM domain maps to 172-241 (DFKTQFQEYV…AESAYSKLKS (70 aa)). The segment at 217-245 (ATGQGKTKKESEQKAAESAYSKLKSNNNL) is disordered.

It belongs to the ribonuclease III family. As to quaternary structure, homodimer. The cofactor is Mg(2+).

The protein localises to the cytoplasm. It catalyses the reaction Endonucleolytic cleavage to 5'-phosphomonoester.. In terms of biological role, digests double-stranded RNA. Involved in the processing of primary rRNA transcript to yield the immediate precursors to the large and small rRNAs (23S and 16S). Processes some mRNAs, and tRNAs when they are encoded in the rRNA operon. Processes pre-crRNA and tracrRNA of type II CRISPR loci if present in the organism. This is Ribonuclease 3 from Staphylococcus haemolyticus (strain JCSC1435).